The primary structure comprises 1117 residues: DNA-directed RNA polymerase subunit beta (1117 aa).

The disordered stretch occupies residues Q1094 to E1117. The segment covering L1108–E1117 has biased composition (basic and acidic residues).

The protein belongs to the RNA polymerase beta chain family. In terms of assembly, in cyanobacteria the RNAP catalytic core is composed of 2 alpha, 1 beta, 1 beta', 1 gamma and 1 omega subunit. When a sigma factor is associated with the core the holoenzyme is formed, which can initiate transcription.

The enzyme catalyses RNA(n) + a ribonucleoside 5'-triphosphate = RNA(n+1) + diphosphate. DNA-dependent RNA polymerase catalyzes the transcription of DNA into RNA using the four ribonucleoside triphosphates as substrates. This Trichormus variabilis (strain ATCC 29413 / PCC 7937) (Anabaena variabilis) protein is DNA-directed RNA polymerase subunit beta.